The primary structure comprises 483 residues: Rhamnulokinase (483 aa).

A11–R15 serves as a coordination point for ATP. Residues G79 and H234–T236 each bind substrate. Residue D235 is the Proton acceptor of the active site. Residue T257 participates in ATP binding. N294 serves as a coordination point for substrate. Q302 provides a ligand contact to ATP. An intrachain disulfide couples C352 to C369. G401 serves as a coordination point for ATP.

It belongs to the rhamnulokinase family. The cofactor is Mg(2+).

It carries out the reaction L-rhamnulose + ATP = L-rhamnulose 1-phosphate + ADP + H(+). The protein operates within carbohydrate degradation; L-rhamnose degradation; glycerone phosphate from L-rhamnose: step 2/3. Involved in the catabolism of L-rhamnose (6-deoxy-L-mannose). Catalyzes the transfer of the gamma-phosphate group from ATP to the 1-hydroxyl group of L-rhamnulose to yield L-rhamnulose 1-phosphate. The polypeptide is Rhamnulokinase (Listeria monocytogenes serovar 1/2a (strain ATCC BAA-679 / EGD-e)).